The following is a 235-amino-acid chain: MSKQLIYSGKAKDIYTTEDENLIISTYKDQATAFNGVKKEQIAGKGVLNNQISSFIFEKLNAAGVATHFVEKLSDTEQLNKKVKIIPLEVVLRNYTAGSFSKRFGVDEGIALETPIVEFYYKNDDLDDPFINDEHVKFLQIAGDQQIAYLKEETRRINELLKVWFAEIGLKLIDFKLEFGFDKDGKIILADEFSPDNCRLWDADGNHMDKDVFRRGLGELTDVYEIVWEKLQGLK.

This sequence belongs to the SAICAR synthetase family.

It carries out the reaction 5-amino-1-(5-phospho-D-ribosyl)imidazole-4-carboxylate + L-aspartate + ATP = (2S)-2-[5-amino-1-(5-phospho-beta-D-ribosyl)imidazole-4-carboxamido]succinate + ADP + phosphate + 2 H(+). It functions in the pathway purine metabolism; IMP biosynthesis via de novo pathway; 5-amino-1-(5-phospho-D-ribosyl)imidazole-4-carboxamide from 5-amino-1-(5-phospho-D-ribosyl)imidazole-4-carboxylate: step 1/2. The polypeptide is Phosphoribosylaminoimidazole-succinocarboxamide synthase (Streptococcus pneumoniae serotype 19F (strain G54)).